Reading from the N-terminus, the 232-residue chain is Ribose-5-phosphate isomerase A (232 aa).

Substrate contacts are provided by residues 28–31 (TGST), 83–86 (DGAD), and 96–99 (KGGG). The active-site Proton acceptor is the Glu-105. Substrate is bound at residue Lys-123.

This sequence belongs to the ribose 5-phosphate isomerase family. Homodimer.

The catalysed reaction is aldehydo-D-ribose 5-phosphate = D-ribulose 5-phosphate. It functions in the pathway carbohydrate degradation; pentose phosphate pathway; D-ribose 5-phosphate from D-ribulose 5-phosphate (non-oxidative stage): step 1/1. Catalyzes the reversible conversion of ribose-5-phosphate to ribulose 5-phosphate. The chain is Ribose-5-phosphate isomerase A from Rhodopseudomonas palustris (strain BisB18).